The chain runs to 170 residues: Protein SOB FIVE-LIKE 5 (170 aa).

Positions 10 to 15 match the SOFL-A motif; the sequence is SGWTLY. The tract at residues 17–78 is disordered; it reads DQSVSSPSPS…GPRNISEEDS (62 aa). Residues 35–44 show a composition bias toward basic and acidic residues; it reads DSRRRSKDSW. Positions 61-70 match the SOFL-B motif; that stretch reads SMISDASSGP. The Nuclear localization signal signature appears at 79 to 86; it reads VKKINIVG.

The protein belongs to the SOFL plant protein family. In terms of tissue distribution, expressed in seedlings, roots, flowers and siliques. Barely detectable in leaves.

It is found in the cytoplasm. Its subcellular location is the nucleus. In terms of biological role, involved in cytokinin-mediated development. The protein is Protein SOB FIVE-LIKE 5 of Arabidopsis thaliana (Mouse-ear cress).